The sequence spans 473 residues: Photosystem II CP43 reaction center protein (473 aa).

A propeptide spanning residues 1–14 (MKTLYSLRRFYHVE) is cleaved from the precursor. Threonine 15 is modified (N-acetylthreonine). Phosphothreonine is present on threonine 15. Helical transmembrane passes span 69 to 93 (LFEVAHFVPEKPMYEQGLILLPHLA), 134 to 155 (LLGPETLEESFPFFGYVWKDRN), 178 to 200 (KALYFGGVYDTWAPGGGDVRKIT), 255 to 275 (KPFAWARRALVWSGEAYLSYS), and 291 to 312 (CFNNTAYPSEFYGPTGPEASQA). Residue glutamate 367 participates in [CaMn4O5] cluster binding. Residues 447–471 (RARAAAAGFEKGIDRDFEPVLSMTP) form a helical membrane-spanning segment.

Belongs to the PsbB/PsbC family. PsbC subfamily. In terms of assembly, PSII is composed of 1 copy each of membrane proteins PsbA, PsbB, PsbC, PsbD, PsbE, PsbF, PsbH, PsbI, PsbJ, PsbK, PsbL, PsbM, PsbT, PsbX, PsbY, PsbZ, Psb30/Ycf12, at least 3 peripheral proteins of the oxygen-evolving complex and a large number of cofactors. It forms dimeric complexes. It depends on Binds multiple chlorophylls and provides some of the ligands for the Ca-4Mn-5O cluster of the oxygen-evolving complex. It may also provide a ligand for a Cl- that is required for oxygen evolution. PSII binds additional chlorophylls, carotenoids and specific lipids. as a cofactor.

Its subcellular location is the plastid. It is found in the chloroplast thylakoid membrane. In terms of biological role, one of the components of the core complex of photosystem II (PSII). It binds chlorophyll and helps catalyze the primary light-induced photochemical processes of PSII. PSII is a light-driven water:plastoquinone oxidoreductase, using light energy to abstract electrons from H(2)O, generating O(2) and a proton gradient subsequently used for ATP formation. This Jasminum nudiflorum (Winter jasmine) protein is Photosystem II CP43 reaction center protein.